The chain runs to 321 residues: 4-hydroxy-3-methylbut-2-enyl diphosphate reductase (321 aa).

Cysteine 12 provides a ligand contact to [4Fe-4S] cluster. Histidine 41 and histidine 74 together coordinate (2E)-4-hydroxy-3-methylbut-2-enyl diphosphate. Positions 41 and 74 each coordinate dimethylallyl diphosphate. Residues histidine 41 and histidine 74 each contribute to the isopentenyl diphosphate site. Cysteine 96 lines the [4Fe-4S] cluster pocket. (2E)-4-hydroxy-3-methylbut-2-enyl diphosphate is bound at residue histidine 124. Histidine 124 serves as a coordination point for dimethylallyl diphosphate. Histidine 124 serves as a coordination point for isopentenyl diphosphate. Glutamate 126 functions as the Proton donor in the catalytic mechanism. Threonine 167 provides a ligand contact to (2E)-4-hydroxy-3-methylbut-2-enyl diphosphate. Cysteine 197 serves as a coordination point for [4Fe-4S] cluster. Residues serine 225, serine 226, asparagine 227, and serine 269 each coordinate (2E)-4-hydroxy-3-methylbut-2-enyl diphosphate. The dimethylallyl diphosphate site is built by serine 225, serine 226, asparagine 227, and serine 269. Positions 225, 226, 227, and 269 each coordinate isopentenyl diphosphate.

It belongs to the IspH family. In terms of assembly, homodimer. It depends on [4Fe-4S] cluster as a cofactor.

It carries out the reaction isopentenyl diphosphate + 2 oxidized [2Fe-2S]-[ferredoxin] + H2O = (2E)-4-hydroxy-3-methylbut-2-enyl diphosphate + 2 reduced [2Fe-2S]-[ferredoxin] + 2 H(+). The enzyme catalyses dimethylallyl diphosphate + 2 oxidized [2Fe-2S]-[ferredoxin] + H2O = (2E)-4-hydroxy-3-methylbut-2-enyl diphosphate + 2 reduced [2Fe-2S]-[ferredoxin] + 2 H(+). It functions in the pathway isoprenoid biosynthesis; dimethylallyl diphosphate biosynthesis; dimethylallyl diphosphate from (2E)-4-hydroxy-3-methylbutenyl diphosphate: step 1/1. The protein operates within isoprenoid biosynthesis; isopentenyl diphosphate biosynthesis via DXP pathway; isopentenyl diphosphate from 1-deoxy-D-xylulose 5-phosphate: step 6/6. In terms of biological role, catalyzes the conversion of 1-hydroxy-2-methyl-2-(E)-butenyl 4-diphosphate (HMBPP) into a mixture of isopentenyl diphosphate (IPP) and dimethylallyl diphosphate (DMAPP). Acts in the terminal step of the DOXP/MEP pathway for isoprenoid precursor biosynthesis. The polypeptide is 4-hydroxy-3-methylbut-2-enyl diphosphate reductase (Escherichia coli O6:K15:H31 (strain 536 / UPEC)).